We begin with the raw amino-acid sequence, 555 residues long: Glucose-6-phosphate isomerase (555 aa).

The active-site Proton donor is glutamate 355. Catalysis depends on residues histidine 386 and lysine 514.

It belongs to the GPI family.

Its subcellular location is the cytoplasm. The catalysed reaction is alpha-D-glucose 6-phosphate = beta-D-fructose 6-phosphate. It participates in carbohydrate biosynthesis; gluconeogenesis. The protein operates within carbohydrate degradation; glycolysis; D-glyceraldehyde 3-phosphate and glycerone phosphate from D-glucose: step 2/4. Its function is as follows. Catalyzes the reversible isomerization of glucose-6-phosphate to fructose-6-phosphate. The chain is Glucose-6-phosphate isomerase from Buchnera aphidicola subsp. Schizaphis graminum (strain Sg).